Reading from the N-terminus, the 341-residue chain is GTPase Obg (341 aa).

The Obg domain maps to 1–159 (MKFLDQAKIY…RTIWLRLKLI (159 aa)). An OBG-type G domain is found at 160–327 (ADAGLVGLPN…TLRQLARIID (168 aa)). GTP contacts are provided by residues 166 to 173 (GLPNAGKS), 191 to 195 (FTTLH), 212 to 215 (DIPG), 279 to 282 (SQVD), and 308 to 310 (SAV). Mg(2+) contacts are provided by Ser173 and Thr193.

The protein belongs to the TRAFAC class OBG-HflX-like GTPase superfamily. OBG GTPase family. Monomer. Mg(2+) is required as a cofactor.

It is found in the cytoplasm. Its function is as follows. An essential GTPase which binds GTP, GDP and possibly (p)ppGpp with moderate affinity, with high nucleotide exchange rates and a fairly low GTP hydrolysis rate. Plays a role in control of the cell cycle, stress response, ribosome biogenesis and in those bacteria that undergo differentiation, in morphogenesis control. The polypeptide is GTPase Obg (Brucella abortus biovar 1 (strain 9-941)).